The following is a 407-amino-acid chain: Argininosuccinate synthase (407 aa).

Residues 16 to 24 (AYSGGLDTS) and alanine 44 contribute to the ATP site. L-citrulline-binding residues include tyrosine 96 and serine 101. Glycine 126 serves as a coordination point for ATP. Positions 128, 132, and 133 each coordinate L-aspartate. Asparagine 132 is a binding site for L-citrulline. Residues arginine 136, serine 185, serine 194, glutamate 270, and tyrosine 282 each contribute to the L-citrulline site.

It belongs to the argininosuccinate synthase family. Type 1 subfamily. In terms of assembly, homotetramer.

Its subcellular location is the cytoplasm. It catalyses the reaction L-citrulline + L-aspartate + ATP = 2-(N(omega)-L-arginino)succinate + AMP + diphosphate + H(+). It participates in amino-acid biosynthesis; L-arginine biosynthesis; L-arginine from L-ornithine and carbamoyl phosphate: step 2/3. This is Argininosuccinate synthase from Shewanella amazonensis (strain ATCC BAA-1098 / SB2B).